We begin with the raw amino-acid sequence, 488 residues long: 3-octaprenyl-4-hydroxybenzoate carboxy-lyase (488 aa).

Asparagine 172 provides a ligand contact to Mn(2+). Residues 175-177 (IYR), 189-191 (RWL), and 194-195 (RG) contribute to the prenylated FMN site. Mn(2+) is bound at residue glutamate 238. Aspartate 287 (proton donor) is an active-site residue.

The protein belongs to the UbiD family. As to quaternary structure, homohexamer. The cofactor is prenylated FMN. Mn(2+) is required as a cofactor.

The protein localises to the cell membrane. The catalysed reaction is a 4-hydroxy-3-(all-trans-polyprenyl)benzoate + H(+) = a 2-(all-trans-polyprenyl)phenol + CO2. It participates in cofactor biosynthesis; ubiquinone biosynthesis. In terms of biological role, catalyzes the decarboxylation of 3-octaprenyl-4-hydroxy benzoate to 2-octaprenylphenol, an intermediate step in ubiquinone biosynthesis. The sequence is that of 3-octaprenyl-4-hydroxybenzoate carboxy-lyase from Pseudomonas putida (strain GB-1).